We begin with the raw amino-acid sequence, 396 residues long: Elongation factor Tu (396 aa).

One can recognise a tr-type G domain in the interval Lys-10 to Arg-207. The interval Gly-19–Thr-26 is G1. Gly-19–Thr-26 provides a ligand contact to GTP. Thr-26 contributes to the Mg(2+) binding site. Residues Gly-60–Ser-64 form a G2 region. Residues Asp-81 to Gly-84 form a G3 region. GTP-binding positions include Asp-81–His-85 and Asn-136–Asp-139. The G4 stretch occupies residues Asn-136 to Asp-139. A G5 region spans residues Ser-174 to Leu-176.

Belongs to the TRAFAC class translation factor GTPase superfamily. Classic translation factor GTPase family. EF-Tu/EF-1A subfamily. In terms of assembly, monomer.

The protein resides in the cytoplasm. The catalysed reaction is GTP + H2O = GDP + phosphate + H(+). GTP hydrolase that promotes the GTP-dependent binding of aminoacyl-tRNA to the A-site of ribosomes during protein biosynthesis. The sequence is that of Elongation factor Tu from Novosphingobium aromaticivorans (strain ATCC 700278 / DSM 12444 / CCUG 56034 / CIP 105152 / NBRC 16084 / F199).